The following is a 768-amino-acid chain: Telomere repeats-binding bouquet formation protein 1 (768 aa).

ARM repeat units lie at residues 101–145 (ELFQ…REVG) and 341–384 (NGLP…GQNS). Positions 399 to 448 (ETLREHWKAAKEILCRIKQFEKGGKEEKQQNRSGHYKDNTPSMKVNIQTN) form a coiled coil. Composition is skewed to basic and acidic residues over residues 422–436 (GKEE…HYKD) and 461–475 (RAED…ELRS). 2 disordered regions span residues 422–441 (GKEE…TPSM) and 454–475 (ADST…ELRS). Positions 524–700 (QNLDKEKTFD…EAMERRSPVP (177 aa)) are interaction with TERF1. Thr-648 bears the Phosphothreonine mark. One can recognise a Myb-like domain in the interval 707–760 (KKRRIRKDFTKEEVNYLFHGVKTMGNHWNSILWSFPFQKGRRAVDLAHKYHRLI).

The protein belongs to the TERB1 family. As to quaternary structure, component of the MAJIN-TERB1-TERB2 complex, composed of MAJIN, TERB1 and TERB2. Interacts with TERF1, STAG3 and SUN1. Interacts (via Myb-like domain) with the cohesin complex; probably mediated via interaction with STAG3. Post-translationally, phosphorylated by CDK. Phosphorylation by CDK takes place in late prophase when the cap exchange is prominent. is important for the stabilization of telomere attachment but dispenable for the cap exchange. Expressed in testis and fetal oocytes.

Its subcellular location is the chromosome. The protein localises to the telomere. The protein resides in the nucleus inner membrane. Meiosis-specific telomere-associated protein involved in meiotic telomere attachment to the nucleus inner membrane, a crucial step for homologous pairing and synapsis. Component of the MAJIN-TERB1-TERB2 complex, which promotes telomere cap exchange by mediating attachment of telomeric DNA to the inner nuclear membrane and replacement of the protective cap of telomeric chromosomes: in early meiosis, the MAJIN-TERB1-TERB2 complex associates with telomeric DNA and the shelterin/telosome complex. During prophase, the complex matures and promotes release of the shelterin/telosome complex from telomeric DNA. In the MAJIN-TERB1-TERB2 complex, TERB1 probably mediates association with the shelterin/telosome complex via interaction with TERF1, promoting priming telomeric DNA attachment'. Promotes telomere association with the nuclear envelope and deposition of the SUN-KASH/LINC complex. Also recruits cohesin to telomeres to develop structural rigidity. This chain is Telomere repeats-binding bouquet formation protein 1, found in Mus musculus (Mouse).